Here is a 440-residue protein sequence, read N- to C-terminus: Enolase (440 aa).

An igE-binding determinant region spans residues 120-189 (KAAAAEKRVP…TEAMRQGAEV (70 aa)). Substrate contacts are provided by histidine 159 and glutamate 168. Catalysis depends on glutamate 211, which acts as the Proton donor. Aspartate 246, glutamate 297, and aspartate 324 together coordinate Mg(2+). Residues glutamate 297 and aspartate 324 each contribute to the substrate site. Lysine 349 (proton acceptor) is an active-site residue. Substrate contacts are provided by residues 376 to 379 (SHRS) and lysine 400.

The protein belongs to the enolase family. As to quaternary structure, homodimer. Requires Mg(2+) as cofactor.

It localises to the cytoplasm. It carries out the reaction (2R)-2-phosphoglycerate = phosphoenolpyruvate + H2O. It functions in the pathway carbohydrate degradation; glycolysis; pyruvate from D-glyceraldehyde 3-phosphate: step 4/5. In Davidiella tassiana (Mycosphaerella tassiana), this protein is Enolase (ENO).